The chain runs to 342 residues: Trans-3-hydroxy-L-proline dehydratase (342 aa).

Residue Ser90 is the Proton acceptor of the active site. Residues 91 to 92 (GS), Asp252, and 257 to 258 (GT) contribute to the substrate site.

The protein belongs to the proline racemase family.

The catalysed reaction is trans-3-hydroxy-L-proline = 1-pyrroline-2-carboxylate + H2O. In terms of biological role, catalyzes the dehydration of trans-3-hydroxy-L-proline (t3LHyp) to Delta(1)-pyrroline-2-carboxylate (Pyr2C). Can also catalyze the epimerization of trans-4-hydroxy-L-proline (t4LHyp) to cis-4-hydroxy-D-proline (c4DHyp), albeit with 150-fold lower efficiency. May be involved in the degradation pathway that converts t3LHyp to L-proline, which would allow R.meliloti to grow on t3LHyp as a sole carbon source. Displays no proline racemase activity. This Rhizobium meliloti (strain 1021) (Ensifer meliloti) protein is Trans-3-hydroxy-L-proline dehydratase.